The following is a 188-amino-acid chain: Photosystem I assembly protein Ycf4 (188 aa).

2 helical membrane passes run 26–46 (YFWAVIVSIGGLGFLLAGLSS) and 70–90 (LLFYGTAGTLLAIYLWLSLLW).

This sequence belongs to the Ycf4 family.

The protein localises to the cellular thylakoid membrane. Functionally, seems to be required for the assembly of the photosystem I complex. This Microcystis aeruginosa (strain NIES-843 / IAM M-2473) protein is Photosystem I assembly protein Ycf4.